Here is a 489-residue protein sequence, read N- to C-terminus: uncharacterized protein (489 aa).

The next 12 helical transmembrane spans lie at 14 to 34 (LLFV…ISLF), 36 to 56 (LGPF…IVTL), 100 to 120 (IIGP…FSGI), 127 to 147 (LVNT…LAFI), 158 to 178 (LIAL…IVAI), 203 to 223 (EISF…YAGV), 241 to 261 (ILIV…IILN), 286 to 306 (AAGL…NVST), 344 to 364 (IWFT…IPLV), 380 to 400 (VGSA…FKFI), 419 to 439 (LFCL…FPVI), and 449 to 469 (HTLT…LFLL).

It to M.genitalium MG226.

It is found in the cell membrane. This is an uncharacterized protein from Mycoplasma genitalium (strain ATCC 33530 / DSM 19775 / NCTC 10195 / G37) (Mycoplasmoides genitalium).